The following is a 908-amino-acid chain: Translation initiation factor IF-2 (908 aa).

2 disordered regions span residues 52 to 229 (QSHG…AEEA) and 241 to 316 (AGQY…SAQH). Residues 65 to 84 (KSKTTSTARVTGSSGKSKSV) show a composition bias toward polar residues. Basic and acidic residues-rich tracts occupy residues 94–108 (FEKP…ELAA), 120–138 (AAKD…EERQ), 176–185 (IEVKPKEQPK), 193–229 (PKVE…AEEA), 270–280 (SFEKERREIKR), and 294–303 (KNQDEREIKN). The tr-type G domain occupies 409–578 (TRPPVVTIMG…SLQAELMELE (170 aa)). Residues 418–425 (GHVDHGKT) are G1. A GTP-binding site is contributed by 418–425 (GHVDHGKT). Positions 443 to 447 (GITQH) are G2. The interval 464 to 467 (DTPG) is G3. Residues 464–468 (DTPGH) and 518–521 (NKMD) contribute to the GTP site. Positions 518-521 (NKMD) are G4. The tract at residues 554–556 (SAK) is G5.

The protein belongs to the TRAFAC class translation factor GTPase superfamily. Classic translation factor GTPase family. IF-2 subfamily.

Its subcellular location is the cytoplasm. Its function is as follows. One of the essential components for the initiation of protein synthesis. Protects formylmethionyl-tRNA from spontaneous hydrolysis and promotes its binding to the 30S ribosomal subunits. Also involved in the hydrolysis of GTP during the formation of the 70S ribosomal complex. The chain is Translation initiation factor IF-2 from Psychrobacter arcticus (strain DSM 17307 / VKM B-2377 / 273-4).